An 87-amino-acid polypeptide reads, in one-letter code: Protein U62 (87 aa).

The protein belongs to the herpesviridae UL91 family.

This is Protein U62 (U62) from Human herpesvirus 6B (strain Z29) (HHV-6 variant B).